A 180-amino-acid polypeptide reads, in one-letter code: MFPMVTGFMNYGQQAVRAARYIGQSFMITLSHANRLPVTIQYPYEKSITSERFRGRIHFEFDKCIACEVCVRVCPIDLPVVDWRFETDIRKKRLLNYSIDFGICIFCGNCVEYCPTNCLSMTEEYELSTYDRHELNYNQIALGRLPIPVVGDYTIQTIMNSNQTKIAMNKPLDSRTITNY.

4Fe-4S ferredoxin-type domains follow at residues 55-84 (GRIHFEFDKCIACEVCVRVCPIDLPVVDWR) and 95-124 (LNYSIDFGICIFCGNCVEYCPTNCLSMTEE). Cys64, Cys67, Cys70, Cys74, Cys104, Cys107, Cys110, and Cys114 together coordinate [4Fe-4S] cluster.

It belongs to the complex I 23 kDa subunit family. As to quaternary structure, NDH is composed of at least 16 different subunits, 5 of which are encoded in the nucleus. [4Fe-4S] cluster serves as cofactor.

The protein resides in the plastid. Its subcellular location is the chloroplast thylakoid membrane. It catalyses the reaction a plastoquinone + NADH + (n+1) H(+)(in) = a plastoquinol + NAD(+) + n H(+)(out). The enzyme catalyses a plastoquinone + NADPH + (n+1) H(+)(in) = a plastoquinol + NADP(+) + n H(+)(out). NDH shuttles electrons from NAD(P)H:plastoquinone, via FMN and iron-sulfur (Fe-S) centers, to quinones in the photosynthetic chain and possibly in a chloroplast respiratory chain. The immediate electron acceptor for the enzyme in this species is believed to be plastoquinone. Couples the redox reaction to proton translocation, and thus conserves the redox energy in a proton gradient. The sequence is that of NAD(P)H-quinone oxidoreductase subunit I, chloroplastic from Amborella trichopoda.